A 309-amino-acid polypeptide reads, in one-letter code: Glutaminase (309 aa).

Substrate contacts are provided by Ser-64, Asn-114, Glu-160, Asn-167, Tyr-191, Tyr-243, and Val-261.

The protein belongs to the glutaminase family. As to quaternary structure, homotetramer.

The catalysed reaction is L-glutamine + H2O = L-glutamate + NH4(+). The polypeptide is Glutaminase (Methylorubrum extorquens (strain CM4 / NCIMB 13688) (Methylobacterium extorquens)).